We begin with the raw amino-acid sequence, 147 residues long: Hemoglobin subunit beta (147 aa).

V2 bears the N-acetylvaline mark. The Globin domain maps to 3 to 147 (HLTGEEKAAV…VANALAHKYH (145 aa)). T13 is modified (phosphothreonine). The residue at position 45 (S45) is a Phosphoserine. K60 carries the post-translational modification N6-acetyllysine. H64 is a binding site for heme b. K83 is modified (N6-acetyllysine). A heme b-binding site is contributed by H93. C94 is subject to S-nitrosocysteine. At K145 the chain carries N6-acetyllysine.

The protein belongs to the globin family. Heterotetramer of two alpha chains and two beta chains. Red blood cells.

In terms of biological role, involved in oxygen transport from the lung to the various peripheral tissues. The sequence is that of Hemoglobin subunit beta (HBB) from Cheracebus torquatus (Collared titi monkey).